The chain runs to 137 residues: Mediator of RNA polymerase II transcription subunit 21 (137 aa).

The tract at residues 37–56 (PKDTIAPSKADQPPEVDTLP) is disordered. Residues 87-130 (GLDNSEQDQLQSIKELEEELNVAEKQRQEAVKEKDEVLVKLDQT) are a coiled coil.

It belongs to the Mediator complex subunit 21 family. Component of the Mediator complex.

It is found in the nucleus. Its function is as follows. Component of the Mediator complex, a coactivator involved in the regulated transcription of nearly all RNA polymerase II-dependent genes. Mediator functions as a bridge to convey information from gene-specific regulatory proteins to the basal RNA polymerase II transcription machinery. Mediator is recruited to promoters by direct interactions with regulatory proteins and serves as a scaffold for the assembly of a functional preinitiation complex with RNA polymerase II and the general transcription factors. This Neurospora crassa (strain ATCC 24698 / 74-OR23-1A / CBS 708.71 / DSM 1257 / FGSC 987) protein is Mediator of RNA polymerase II transcription subunit 21 (srb-7).